The sequence spans 420 residues: Calreticulin (420 aa).

The signal sequence occupies residues 1-25 (MAIRKGSSYAVAALLALASVAAVAG). Residue asparagine 57 is glycosylated (N-linked (GlcNAc...) asparagine). Positions 115, 117, 134, and 141 each coordinate an alpha-D-glucoside. A run of 7 repeats spans residues 197–208 (KHTGSIYEHWDI), 216–227 (DPEAKKPEDWDD), 233–244 (DPEDKKPEGYDD), 251–262 (DPDAKKPEDWDD), 266–276 (GEWTAPTIPNP), 280–290 (GPWKQKKIKNP), and 294–304 (GKWKAPMIDNP). Residues 197 to 262 (KHTGSIYEHW…DAKKPEDWDD (66 aa)) form a 4 X approximate repeats region. Residues 213–258 (KIKDPEAKKPEDWDDKEYIPDPEDKKPEGYDDIPKEIPDPDAKKPE) show a composition bias toward basic and acidic residues. The tract at residues 213 to 285 (KIKDPEAKKP…PEYKGPWKQK (73 aa)) is disordered. The tract at residues 266–304 (GEWTAPTIPNPEYKGPWKQKKIKNPNYQGKWKAPMIDNP) is 3 X approximate repeats. An an alpha-D-glucoside-binding site is contributed by glutamate 324. The span at 355–381 (GKHKEAEKAAFDEAEKKKEEEDAAKGG) shows a compositional bias: basic and acidic residues. The segment at 355–420 (GKHKEAEKAA…DSDDEKHDEL (66 aa)) is disordered. Residues 382–402 (DDEDDDLEDEEDDEKADEDKA) are compositionally biased toward acidic residues. A compositionally biased stretch (basic and acidic residues) spans 403 to 420 (DSDAEDGKDSDDEKHDEL). The Prevents secretion from ER signature appears at 417–420 (HDEL).

This sequence belongs to the calreticulin family.

The protein localises to the endoplasmic reticulum lumen. In terms of biological role, molecular calcium-binding chaperone promoting folding, oligomeric assembly and quality control in the ER via the calreticulin/calnexin cycle. This lectin may interact transiently with almost all of the monoglucosylated glycoproteins that are synthesized in the ER. This is Calreticulin (CRT) from Zea mays (Maize).